The primary structure comprises 97 residues: Probable lipopolysaccharide assembly protein A (97 aa).

2 helical membrane passes run 1–21 (MIKYILGIVIFIAIVLVAITI) and 46–66 (VAILFGLGLILGWLITAFFYI). A coiled-coil region spans residues 67–95 (KLKLKNMALARQVKRQTLQINELTTTRDK).

Belongs to the LapA family.

Its subcellular location is the cell inner membrane. In terms of biological role, involved in the assembly of lipopolysaccharide (LPS). The protein is Probable lipopolysaccharide assembly protein A of Haemophilus influenzae (strain ATCC 51907 / DSM 11121 / KW20 / Rd).